Reading from the N-terminus, the 188-residue chain is Photosystem I assembly protein Ycf4 (188 aa).

2 helical membrane-spanning segments follow: residues Leu-22 to Ser-42 and Leu-68 to Ile-88.

Belongs to the Ycf4 family.

It localises to the plastid. The protein localises to the chloroplast thylakoid membrane. Seems to be required for the assembly of the photosystem I complex. The sequence is that of Photosystem I assembly protein Ycf4 from Zygnema circumcarinatum (Green alga).